The chain runs to 328 residues: MAHTITPAVESGLGVLTHAVSSTVPVAVLPSLPPGIGSGVPAGAGLLSQIHATSWDPTLSTDWDNEKASQQCILRIKRDIMSIYKEPPPGMFVVPDPHDMTKIHALITGPFDTPYEGGFFLFLFRCPPDYPIHPPRVKLITTGHNTVRFNPNFYRNGKVCLSILGTWTGPAWSPAQSISSVLISIQSLMTENPYHNEPGFEQERHPGDSKNYNECIRHETMRVAVCDMLEGKVSCPEALWSVMEKSFLEYYDFYEGVCKERLHLQGQNMQDPFGEKRGRFDYQGLLTRLRAIQRRLREKCPPEDNDGDSDSDTSSSGTDPDSQGSSQP.

Positions 71 to 225 (QCILRIKRDI…IRHETMRVAV (155 aa)) constitute a UBC core domain. C160 serves as the catalytic Glycyl thioester intermediate. Residues 295-328 (RLREKCPPEDNDGDSDSDTSSSGTDPDSQGSSQP) are disordered. Residues 312–328 (DTSSSGTDPDSQGSSQP) show a composition bias toward low complexity.

Belongs to the ubiquitin-conjugating enzyme family.

The protein localises to the cytoplasm. It localises to the nucleus. It carries out the reaction S-ubiquitinyl-[E1 ubiquitin-activating enzyme]-L-cysteine + [E2 ubiquitin-conjugating enzyme]-L-cysteine = [E1 ubiquitin-activating enzyme]-L-cysteine + S-ubiquitinyl-[E2 ubiquitin-conjugating enzyme]-L-cysteine.. The protein operates within protein modification; protein ubiquitination. Its function is as follows. Catalyzes the covalent attachment of ubiquitin to other proteins. May be involved in apoptosis regulation. This is Ubiquitin-conjugating enzyme E2 Z (ube2z) from Danio rerio (Zebrafish).